A 38-amino-acid chain; its full sequence is Defensin-1 (38 aa).

Cystine bridges form between Cys4–Cys25, Cys11–Cys33, and Cys15–Cys35.

Its subcellular location is the secreted. Functionally, has antibacterial activity against the Gram-positive bacteria L.lactis and S.aureus, and against the Gram-negative bacteria E.coli D32 and V.parahemolyticus. This chain is Defensin-1, found in Crassostrea virginica (Eastern oyster).